Reading from the N-terminus, the 1325-residue chain is Cellulose synthase 1 operon protein C (1325 aa).

A signal peptide spans 1 to 30 (MNRRYVFSLSAGLLASSCMGAIMPVPVARA). TPR repeat units lie at residues 50–83 (RQIL…APDA), 85–117 (DVLE…APGS), 292–325 (AGLA…NSHD), 326–359 (ADSL…DPKT), 406–439 (TGAT…DPNN), 558–591 (NDAA…KEDL), 702–735 (MGIA…DPEA), and 737–769 (SPKL…NPQD). Residues 838–886 (VEGSRSASGPAATEEDALAPPSSNPFRHHGYGRQTELGAPVTGGSYSME) are disordered.

The protein belongs to the AcsC/BcsC family.

The protein resides in the cell outer membrane. It functions in the pathway glycan metabolism; bacterial cellulose biosynthesis. Functionally, required for maximal bacterial cellulose synthesis. It may be involved in the formation of a membrane complex for extrusion of the cellulose product. This Komagataeibacter xylinus (Gluconacetobacter xylinus) protein is Cellulose synthase 1 operon protein C (bcsCI).